The primary structure comprises 85 residues: Toxin Cll6 (85 aa).

A signal peptide spans 1 to 19 (MNSLLMIIGCLVLIGTVWT). The 64-residue stretch at 20-83 (KEGYLVNMKT…TWPLPGKSCS (64 aa)) folds into the LCN-type CS-alpha/beta domain. 4 disulfide bridges follow: C31/C82, C35/C58, C44/C63, and C48/C65. At S83 the chain carries Serine amide.

It belongs to the long (4 C-C) scorpion toxin superfamily. Sodium channel inhibitor family. Beta subfamily. In terms of tissue distribution, expressed by the venom gland.

It localises to the secreted. Beta toxins bind voltage-independently at site-4 of sodium channels (Nav) and shift the voltage of activation toward more negative potentials thereby affecting sodium channel activation and promoting spontaneous and repetitive firing. This chain is Toxin Cll6, found in Centruroides limpidus (Mexican scorpion).